We begin with the raw amino-acid sequence, 36 residues long: APLEPVYPGDNATPEQMAQYAAELRRYINMLTRPRY.

Tyrosine 36 bears the Tyrosine amide mark.

It belongs to the NPY family.

It is found in the secreted. In terms of biological role, hormone secreted by pancreatic cells that acts as a regulator of pancreatic and gastrointestinal functions probably by signaling through the G protein-coupled receptor NPY4R2. The polypeptide is Pancreatic polypeptide (PPY) (Tapirus pinchaque (Mountain tapir)).